A 353-amino-acid chain; its full sequence is UDP-N-acetylglucosamine--N-acetylmuramyl-(pentapeptide) pyrophosphoryl-undecaprenol N-acetylglucosamine transferase (353 aa).

Residues 10–12 (TGG), asparagine 124, serine 183, and glutamine 283 contribute to the UDP-N-acetyl-alpha-D-glucosamine site.

This sequence belongs to the glycosyltransferase 28 family. MurG subfamily.

It localises to the cell inner membrane. The enzyme catalyses di-trans,octa-cis-undecaprenyl diphospho-N-acetyl-alpha-D-muramoyl-L-alanyl-D-glutamyl-meso-2,6-diaminopimeloyl-D-alanyl-D-alanine + UDP-N-acetyl-alpha-D-glucosamine = di-trans,octa-cis-undecaprenyl diphospho-[N-acetyl-alpha-D-glucosaminyl-(1-&gt;4)]-N-acetyl-alpha-D-muramoyl-L-alanyl-D-glutamyl-meso-2,6-diaminopimeloyl-D-alanyl-D-alanine + UDP + H(+). It participates in cell wall biogenesis; peptidoglycan biosynthesis. Cell wall formation. Catalyzes the transfer of a GlcNAc subunit on undecaprenyl-pyrophosphoryl-MurNAc-pentapeptide (lipid intermediate I) to form undecaprenyl-pyrophosphoryl-MurNAc-(pentapeptide)GlcNAc (lipid intermediate II). The chain is UDP-N-acetylglucosamine--N-acetylmuramyl-(pentapeptide) pyrophosphoryl-undecaprenol N-acetylglucosamine transferase from Helicobacter pylori (strain Shi470).